The sequence spans 490 residues: MPAVQLLLLACLLGGVGARTAQFQKANDRSGRCQYTFSVASPSESSCPEQGQAMLAIQELQRDSSEQRATLESTKARLSSLEALLHRLTSGQPAGPLETHQGLQRELEALRREREQLETQTQELESAYSNLVRDKSALEEEKRRLQAENEDLARRLESSSQEVASLRRGQCPQAHSSSQDVPSGSREVAKWNLENMDFQELKSELTEVPASQILKESPSGHPRNEEGGTGCGELVWVGEPITLRTAETITGKYGVWMRDPRAAFPYTGETTWRIDTVGTDIRQVFEYDHIRKFTQGYPSKVHVLPRPLESTGAVVYRGSLYFQAAESRTVLRYDLRTETLKAEKEIPGAGYHGQFPYSWGGYTDIDLAVDEIGLWVIYSTEAAKGAIVLSKLNPETLELEQTWETNIRKQSVANAFIICGTLYTVSSYSSPDATVNFAYDTGTGSSKALTVPFKNRYKYSSMIDYNPLERKLFAWDNFNMVSYDIKLSRL.

The signal sequence occupies residues 1 to 18 (MPAVQLLLLACLLGGVGA). Residues 51–170 (GQAMLAIQEL…QEVASLRRGQ (120 aa)) are a coiled coil. Positions 152–186 (LARRLESSSQEVASLRRGQCPQAHSSSQDVPSGSR) are disordered. Positions 173 to 182 (QAHSSSQDVP) are enriched in polar residues. The 260-residue stretch at 230 to 489 (GCGELVWVGE…MVSYDIKLSR (260 aa)) folds into the Olfactomedin-like domain. Cys-231 and Cys-419 form a disulfide bridge. Ca(2+) is bound by residues Asp-366, Asn-414, Ala-415, Ile-463, and Asp-464. The short motif at 488 to 490 (SRL) is the Microbody targeting signal element.

Homodimer (via N-terminus). Can also form higher oligomers. Interacts with OLFM3, FN1, NRCAM, GLDN and NFASC. Interacts (via N-terminus) with MYL2. Interacts with SFRP1, FRZB, FZD7, FZD10, FZD1 and WIF1; regulates Wnt signaling. Interacts with SNTA1; regulates muscle hypertrophy. Interacts with ERBB2 and ERBB3; activates ERBB2-ERBB3 signaling pathway. Interacts with SNCG; affects its secretion and its aggregation. Post-translationally, palmitoylated. Undergoes a calcium-dependent proteolytic cleavage at Gln-212 by CAPN2 in the endoplasmic reticulum. The result is the production of two fragments, one of 35 kDa containing the C-terminal olfactomedin-like domain, and another of 20 kDa containing the N-terminal leucine zipper-like domain. In terms of processing, glycosylated. The myocilin 35 kDa fragment is detected in iris and ciliary body.

Its subcellular location is the secreted. The protein resides in the golgi apparatus. The protein localises to the cytoplasmic vesicle. It localises to the extracellular space. It is found in the extracellular matrix. Its subcellular location is the extracellular exosome. The protein resides in the mitochondrion. The protein localises to the mitochondrion intermembrane space. It localises to the mitochondrion inner membrane. It is found in the mitochondrion outer membrane. Its subcellular location is the rough endoplasmic reticulum. The protein resides in the cell projection. The protein localises to the cilium. It localises to the endoplasmic reticulum. In terms of biological role, secreted glycoprotein regulating the activation of different signaling pathways in adjacent cells to control different processes including cell adhesion, cell-matrix adhesion, cytoskeleton organization and cell migration. Promotes substrate adhesion, spreading and formation of focal contacts. Negatively regulates cell-matrix adhesion and stress fiber assembly through Rho protein signal transduction. Modulates the organization of actin cytoskeleton by stimulating the formation of stress fibers through interactions with components of Wnt signaling pathways. Promotes cell migration through activation of PTK2 and the downstream phosphatidylinositol 3-kinase signaling. Plays a role in bone formation and promotes osteoblast differentiation in a dose-dependent manner through mitogen-activated protein kinase signaling. Mediates myelination in the peripheral nervous system through ERBB2/ERBB3 signaling. Plays a role as a regulator of muscle hypertrophy through the components of dystrophin-associated protein complex. Involved in positive regulation of mitochondrial depolarization. Plays a role in neurite outgrowth. May participate in the obstruction of fluid outflow in the trabecular meshwork. In Bos taurus (Bovine), this protein is Myocilin (MYOC).